The following is an 840-amino-acid chain: Probable alpha-glucuronidase A (840 aa).

The N-terminal stretch at 1-19 (MWSGIPIFALLSSIGIAAA) is a signal peptide. N-linked (GlcNAc...) asparagine glycosylation is found at N50, N149, N222, N262, N279, N310, N465, N527, N576, N610, N682, N723, and N732.

The protein belongs to the glycosyl hydrolase 67 family.

It is found in the secreted. It carries out the reaction an alpha-D-glucuronoside + H2O = D-glucuronate + an alcohol. Its function is as follows. Alpha-glucuronidase involved in the hydrolysis of xylan, a major structural heterogeneous polysaccharide found in plant biomass representing the second most abundant polysaccharide in the biosphere, after cellulose. Releases 4-O-methylglucuronic acid from xylan. This is Probable alpha-glucuronidase A (aguA) from Aspergillus fumigatus (strain ATCC MYA-4609 / CBS 101355 / FGSC A1100 / Af293) (Neosartorya fumigata).